The following is a 409-amino-acid chain: S-adenosylmethionine synthase (409 aa).

An ATP-binding site is contributed by H15. A Mg(2+)-binding site is contributed by D17. E43 lines the K(+) pocket. L-methionine-binding residues include E56 and Q100. Residues 100–110 are flexible loop; the sequence is QSSDIAQGVNE. ATP contacts are provided by residues 171–173, 248–249, D257, 263–264, A280, and K284; these read DGK, KF, and RK. D257 is a binding site for L-methionine. K288 provides a ligand contact to L-methionine.

This sequence belongs to the AdoMet synthase family. In terms of assembly, homotetramer; dimer of dimers. The cofactor is Mg(2+). K(+) serves as cofactor.

The protein localises to the cytoplasm. The catalysed reaction is L-methionine + ATP + H2O = S-adenosyl-L-methionine + phosphate + diphosphate. Its pathway is amino-acid biosynthesis; S-adenosyl-L-methionine biosynthesis; S-adenosyl-L-methionine from L-methionine: step 1/1. Its function is as follows. Catalyzes the formation of S-adenosylmethionine (AdoMet) from methionine and ATP. The overall synthetic reaction is composed of two sequential steps, AdoMet formation and the subsequent tripolyphosphate hydrolysis which occurs prior to release of AdoMet from the enzyme. The protein is S-adenosylmethionine synthase of Prochlorococcus marinus (strain NATL1A).